The following is a 233-amino-acid chain: Translation initiation factor IF-3 (233 aa).

Disordered stretches follow at residues methionine 1–arginine 21 and leucine 184–arginine 233. The span at alanine 193–proline 211 shows a compositional bias: low complexity. Residues alanine 212–alanine 223 show a composition bias toward pro residues. A compositionally biased stretch (low complexity) spans proline 224–arginine 233.

It belongs to the IF-3 family. Monomer.

Its subcellular location is the cytoplasm. Its function is as follows. IF-3 binds to the 30S ribosomal subunit and shifts the equilibrium between 70S ribosomes and their 50S and 30S subunits in favor of the free subunits, thus enhancing the availability of 30S subunits on which protein synthesis initiation begins. This Anaeromyxobacter dehalogenans (strain 2CP-C) protein is Translation initiation factor IF-3.